Reading from the N-terminus, the 88-residue chain is Small ribosomal subunit protein bS20 (88 aa).

The tract at residues 1–36 is disordered; it reads MANTSSAKKATRKIARRTAVNKSRRTQMRGSVRTVE.

The protein belongs to the bacterial ribosomal protein bS20 family.

Its function is as follows. Binds directly to 16S ribosomal RNA. The protein is Small ribosomal subunit protein bS20 of Rhodopseudomonas palustris (strain HaA2).